Consider the following 368-residue polypeptide: uncharacterized protein (368 aa).

Its function is as follows. Might be involved in sporulation. This is an uncharacterized protein from Brachyspira hyodysenteriae (strain ATCC 49526 / WA1).